The chain runs to 154 residues: 17.0 kDa class II heat shock protein (154 aa).

The region spanning 39–154 (DARAMAATPA…KPKTIEIKVA (116 aa)) is the sHSP domain.

Belongs to the small heat shock protein (HSP20) family.

It localises to the cytoplasm. This chain is 17.0 kDa class II heat shock protein (HSP18), found in Zea mays (Maize).